The following is a 940-amino-acid chain: Isoleucine--tRNA ligase (940 aa).

The 'HIGH' region signature appears at 58 to 68 (PYANGSIHIGH). L-isoleucyl-5'-AMP is bound at residue glutamate 564. The 'KMSKS' region signature appears at 605 to 609 (KMSKS). Lysine 608 is an ATP binding site. Positions 903, 906, 923, and 926 each coordinate Zn(2+).

The protein belongs to the class-I aminoacyl-tRNA synthetase family. IleS type 1 subfamily. In terms of assembly, monomer. Zn(2+) serves as cofactor.

Its subcellular location is the cytoplasm. It catalyses the reaction tRNA(Ile) + L-isoleucine + ATP = L-isoleucyl-tRNA(Ile) + AMP + diphosphate. Its function is as follows. Catalyzes the attachment of isoleucine to tRNA(Ile). As IleRS can inadvertently accommodate and process structurally similar amino acids such as valine, to avoid such errors it has two additional distinct tRNA(Ile)-dependent editing activities. One activity is designated as 'pretransfer' editing and involves the hydrolysis of activated Val-AMP. The other activity is designated 'posttransfer' editing and involves deacylation of mischarged Val-tRNA(Ile). The chain is Isoleucine--tRNA ligase from Shewanella baltica (strain OS155 / ATCC BAA-1091).